The chain runs to 1385 residues: DNA-directed RNA polymerase subunit beta' (1385 aa).

Zn(2+) contacts are provided by cysteine 72, cysteine 74, cysteine 87, and cysteine 90. Residues aspartate 463, aspartate 465, and aspartate 467 each contribute to the Mg(2+) site. Cysteine 813, cysteine 887, cysteine 894, and cysteine 897 together coordinate Zn(2+).

It belongs to the RNA polymerase beta' chain family. As to quaternary structure, the RNAP catalytic core consists of 2 alpha, 1 beta, 1 beta' and 1 omega subunit. When a sigma factor is associated with the core the holoenzyme is formed, which can initiate transcription. Mg(2+) is required as a cofactor. Requires Zn(2+) as cofactor.

It carries out the reaction RNA(n) + a ribonucleoside 5'-triphosphate = RNA(n+1) + diphosphate. Functionally, DNA-dependent RNA polymerase catalyzes the transcription of DNA into RNA using the four ribonucleoside triphosphates as substrates. This chain is DNA-directed RNA polymerase subunit beta', found in Trichlorobacter lovleyi (strain ATCC BAA-1151 / DSM 17278 / SZ) (Geobacter lovleyi).